We begin with the raw amino-acid sequence, 457 residues long: MDSFKVVLEGPAPWGFRLQGGKDFNVPLSISRLTPGGKAAQAGVAVGDWVLSIDGENAGSLTHIEAQNKIRACGERLSLGLSRAQPVQSKPQKASAPAADPPRYTFAPSVSLNKTARPFGAPPPADSAPQQNGQPLRPLVPDASKQRLMENTEDWRPRPGTGQSRSFRILAHLTGTEFMQDPDEEHLKKSSQVPRTEAPAPASSTPQEPWPGPTAPSPTSRPPWAVDPAFAERYAPDKTSTVLTRHSQPATPTPLQSRTSIVQAAAGGVPGGGSNNGKTPVCHQCHKVIRGRYLVALGHAYHPEEFVCSQCGKVLEEGGFFEEKGAIFCPPCYDVRYAPSCAKCKKKITGEIMHALKMTWHVHCFTCAACKTPIRNRAFYMEEGVPYCERDYEKMFGTKCHGCDFKIDAGDRFLEALGFSWHDTCFVCAICQINLEGKTFYSKKDRPLCKSHAFSHV.

The 85-residue stretch at 1–85 (MDSFKVVLEG…RLSLGLSRAQ (85 aa)) folds into the PDZ domain. S78 is modified (phosphoserine). 3 disordered regions span residues 82-142 (SRAQ…LVPD), 176-226 (TEFM…PWAV), and 239-258 (TSTV…LQSR). Asymmetric dimethylarginine is present on R103. Phosphoserine is present on S111. Pro residues predominate over residues 208–221 (EPWPGPTAPSPTSR). S247 bears the Phosphoserine mark. LIM zinc-binding domains follow at residues 280-338 (PVCH…VRYA), 339-398 (PSCA…MFGT), and 399-457 (KCHG…FSHV).

Binds via its LIM zinc-binding 3 domain (LIM 3) to endocytic codes of INSR, but not with those of IGF1R, LDLR, TFRC, or EGFR. Interacts with various PKC isoforms through the LIM zinc-binding domains. Binds to RET in a phosphorylation-independent manner via its LIM zinc-binding domain 2 (LIM 2). Probably part of a complex with SHC and the RET dimer. Interacts with TPM2. Interacts with TBX4 and TBX5. As to expression, isoform 1 and isoform 2 are expressed ubiquitously, however, isoform 2 predominates in skeletal muscle, isoform 1 is more abundant in lung, spleen, leukocytes and fetal liver.

The protein resides in the cytoplasm. Its subcellular location is the cytoskeleton. Functionally, may function as a scaffold on which the coordinated assembly of proteins can occur. May play a role as an adapter that, via its PDZ domain, localizes LIM-binding proteins to actin filaments of both skeletal muscle and nonmuscle tissues. Involved in both of the two fundamental mechanisms of bone formation, direct bone formation (e.g. embryonic flat bones mandible and cranium), and endochondral bone formation (e.g. embryonic long bone development). Plays a role during fracture repair. Involved in BMP6 signaling pathway. In Homo sapiens (Human), this protein is PDZ and LIM domain protein 7 (PDLIM7).